Reading from the N-terminus, the 571-residue chain is Putative diflavin flavoprotein A 1 (571 aa).

The segment at 43 to 236 (ENGTTYNSFL…PPVQLVATGH (194 aa)) is zinc metallo-hydrolase. The Fe cation site is built by H92, E94, D96, H159, D178, and H236. One can recognise a Flavodoxin-like domain in the interval 265 to 426 (VAIFYAANYG…DLDKALGRLS (162 aa)). Residues 427–571 (GGLYIITAQK…VHHRKVGNHY (145 aa)) are flavodoxin-reductase-like.

This sequence in the N-terminal section; belongs to the zinc metallo-hydrolase group 3 family. In the C-terminal section; belongs to the flavodoxin reductase family. Fe cation serves as cofactor.

Its function is as follows. Mediates electron transfer from NADH to oxygen, reducing it to water. This modular protein has 3 redox cofactors, in other organisms the same activity requires 2 or 3 proteins. The chain is Putative diflavin flavoprotein A 1 (dfa1) from Thermosynechococcus vestitus (strain NIES-2133 / IAM M-273 / BP-1).